The following is a 497-amino-acid chain: Glutamyl-tRNA(Gln) amidotransferase subunit A (497 aa).

Catalysis depends on charge relay system residues Lys-91 and Ser-166. The disordered stretch occupies residues 143–171; it reads SSTENSAYGPTHNPWDLERTAGGSGGGSS. Catalysis depends on Ser-190, which acts as the Acyl-ester intermediate.

It belongs to the amidase family. GatA subfamily. In terms of assembly, heterotrimer of A, B and C subunits.

It carries out the reaction L-glutamyl-tRNA(Gln) + L-glutamine + ATP + H2O = L-glutaminyl-tRNA(Gln) + L-glutamate + ADP + phosphate + H(+). Functionally, allows the formation of correctly charged Gln-tRNA(Gln) through the transamidation of misacylated Glu-tRNA(Gln) in organisms which lack glutaminyl-tRNA synthetase. The reaction takes place in the presence of glutamine and ATP through an activated gamma-phospho-Glu-tRNA(Gln). This is Glutamyl-tRNA(Gln) amidotransferase subunit A from Corynebacterium glutamicum (strain R).